The sequence spans 321 residues: Lipoyl synthase (321 aa).

Residues Cys68, Cys73, Cys79, Cys94, Cys98, Cys101, and Ser308 each contribute to the [4Fe-4S] cluster site. Residues 80-297 (FNHGTATFMI…KVIAEDLGFS (218 aa)) enclose the Radical SAM core domain.

The protein belongs to the radical SAM superfamily. Lipoyl synthase family. It depends on [4Fe-4S] cluster as a cofactor.

The protein localises to the cytoplasm. The enzyme catalyses [[Fe-S] cluster scaffold protein carrying a second [4Fe-4S](2+) cluster] + N(6)-octanoyl-L-lysyl-[protein] + 2 oxidized [2Fe-2S]-[ferredoxin] + 2 S-adenosyl-L-methionine + 4 H(+) = [[Fe-S] cluster scaffold protein] + N(6)-[(R)-dihydrolipoyl]-L-lysyl-[protein] + 4 Fe(3+) + 2 hydrogen sulfide + 2 5'-deoxyadenosine + 2 L-methionine + 2 reduced [2Fe-2S]-[ferredoxin]. Its pathway is protein modification; protein lipoylation via endogenous pathway; protein N(6)-(lipoyl)lysine from octanoyl-[acyl-carrier-protein]: step 2/2. Functionally, catalyzes the radical-mediated insertion of two sulfur atoms into the C-6 and C-8 positions of the octanoyl moiety bound to the lipoyl domains of lipoate-dependent enzymes, thereby converting the octanoylated domains into lipoylated derivatives. This chain is Lipoyl synthase, found in Shewanella amazonensis (strain ATCC BAA-1098 / SB2B).